Reading from the N-terminus, the 429-residue chain is Serine/threonine-protein kinase BGLF4 (429 aa).

Residues 1-27 (MDVNMAAELSPTNSSSSGELSVSPEPP) form a disordered region. In terms of domain architecture, Protein kinase spans 1–409 (MDVNMAAELS…CRPRFEHPHL (409 aa)). The span at 14-23 (SSSSGELSVS) shows a compositional bias: low complexity. An SUMO interaction motif region spans residues 36–40 (KVTVI). Residues 110–118 (LYHELMVCD) and E128 each bind ATP. Residue D195 is the Proton acceptor of the active site. The SUMO interaction motif stretch occupies residues 344-350 (VVLLEVL).

It belongs to the protein kinase superfamily. Ser/Thr protein kinase family. In terms of assembly, interacts with host NUP62 and NUP153; this interaction plays a role in nuclear targeting of BGLF4. Interacts with host SUMO1 and SUMO2.

It is found in the virion tegument. The protein resides in the host nucleus. It catalyses the reaction L-seryl-[protein] + ATP = O-phospho-L-seryl-[protein] + ADP + H(+). It carries out the reaction L-threonyl-[protein] + ATP = O-phospho-L-threonyl-[protein] + ADP + H(+). Its function is as follows. Plays many key roles by phosphorylating several proteins including the viral DNA processivity factor BMRF1, EBNA1 or EBNA2. Modifies the host nuclear envelope structure and induces the redistribution of nuclear envelope-associated proteins by phosphorylating host nucleoporins. Subsequently, promotes the nuclear transport of EBV lytic proteins. Required for efficient lytic DNA replication and release of nucleocapsids from the nucleus. Contributes to the compaction of host cell chromatin in cells undergoing lytic replication, presumably by phosphorylating the host condensin complex and host TOP2A. Induces disassembly of the nuclear lamina by phosphorylating with host LMNA. Phosphorylates substrates involved in capsid assembly and DNA packaging. Facilitates the switch from latent to lytic DNA replication by down-regulating EBNA1 replication function. Phosphorylates the viral immediate-early protein BZLF1 and inhibits its sumoylation by interacting with host SUMO1 and SUMO2. Phosphorylates also host SAMHD1 and thereby counteracts its antiviral effect by reducing its dNTP hydrolase activity. This Epstein-Barr virus (strain AG876) (HHV-4) protein is Serine/threonine-protein kinase BGLF4.